A 475-amino-acid polypeptide reads, in one-letter code: Bifunctional protein HldE (475 aa).

The interval methionine 1–threonine 318 is ribokinase. Position 195–198 (asparagine 195–glutamate 198) interacts with ATP. Aspartate 264 is a catalytic residue. Positions methionine 344–serine 475 are cytidylyltransferase.

This sequence in the N-terminal section; belongs to the carbohydrate kinase PfkB family. In the C-terminal section; belongs to the cytidylyltransferase family. As to quaternary structure, homodimer.

The catalysed reaction is D-glycero-beta-D-manno-heptose 7-phosphate + ATP = D-glycero-beta-D-manno-heptose 1,7-bisphosphate + ADP + H(+). It catalyses the reaction D-glycero-beta-D-manno-heptose 1-phosphate + ATP + H(+) = ADP-D-glycero-beta-D-manno-heptose + diphosphate. It participates in nucleotide-sugar biosynthesis; ADP-L-glycero-beta-D-manno-heptose biosynthesis; ADP-L-glycero-beta-D-manno-heptose from D-glycero-beta-D-manno-heptose 7-phosphate: step 1/4. It functions in the pathway nucleotide-sugar biosynthesis; ADP-L-glycero-beta-D-manno-heptose biosynthesis; ADP-L-glycero-beta-D-manno-heptose from D-glycero-beta-D-manno-heptose 7-phosphate: step 3/4. Catalyzes the phosphorylation of D-glycero-D-manno-heptose 7-phosphate at the C-1 position to selectively form D-glycero-beta-D-manno-heptose-1,7-bisphosphate. Its function is as follows. Catalyzes the ADP transfer from ATP to D-glycero-beta-D-manno-heptose 1-phosphate, yielding ADP-D-glycero-beta-D-manno-heptose. The protein is Bifunctional protein HldE of Cronobacter sakazakii (strain ATCC BAA-894) (Enterobacter sakazakii).